The following is a 78-amino-acid chain: Acyl carrier protein (78 aa).

In terms of domain architecture, Carrier spans 2 to 77 (SDIAERVKKI…DAIKFLEKNA (76 aa)). Ser-37 carries the post-translational modification O-(pantetheine 4'-phosphoryl)serine.

Belongs to the acyl carrier protein (ACP) family. 4'-phosphopantetheine is transferred from CoA to a specific serine of apo-ACP by AcpS. This modification is essential for activity because fatty acids are bound in thioester linkage to the sulfhydryl of the prosthetic group.

It localises to the cytoplasm. It functions in the pathway lipid metabolism; fatty acid biosynthesis. In terms of biological role, carrier of the growing fatty acid chain in fatty acid biosynthesis. This Azorhizobium caulinodans (strain ATCC 43989 / DSM 5975 / JCM 20966 / LMG 6465 / NBRC 14845 / NCIMB 13405 / ORS 571) protein is Acyl carrier protein.